Reading from the N-terminus, the 1305-residue chain is Nonribosomal peptide synthetase hkm11 (1305 aa).

The interval 278-672 is adenylation; sequence TYGELDRWAK…GEIEHHLRPK (395 aa). The Carrier domain occupies 788–864; that stretch reads APTTEQEALL…SLASRMRQYN (77 aa). S825 is modified (O-(pantetheine 4'-phosphoryl)serine). Residues 926 to 1166 are condensation; it reads KGQLDRHQLQ…LCLNITAVRV (241 aa).

Belongs to the NRP synthetase family.

The catalysed reaction is hancockiamide D + (E)-cinnamate + ATP = hancockiamide A + AMP + diphosphate. It carries out the reaction hancockiamide H + (E)-cinnamate + ATP = hancockiamide G + AMP + diphosphate. The protein operates within secondary metabolite biosynthesis. Functionally, nonribosomal peptide synthetase; part of the gene cluster that mediates the biosynthesis of hancockiamides, an unusual new family of N-cinnamoylated piperazines. The NRPS hkm10 and the NmrA-like reductase hkm9 are proposed to convert two molecules of L-Phe to the intermediary piperazine called xenocockiamide A. Xenocockiamide A is then converted to hancockiamide D via a series of hydroxylations and O-methylations. The tyrosinase hkm6 may catalyze an aromatic hydroxylation, then the 2-oxoglutarate-dependent Fe(II) dioxygenase hkm4 and the FAD-dependent phenol hydroxylase hkm7 may catalyze consecutive hydroxylations to install 2 more hydroxy groups, and the methyltransferase hkm8 probably catalyzes two methylations using 2 molecules of S-adenosyl-L-methionine (SAM). The NRPS hkm11 activates and transfers trans-cinnamate supplied by the PAL hkm12 to hancockiamide D and produces hancockiamide A. NRPS Hkm11 has the flexibility to tolerate the bulky hancockiamide G as a substrate and the absence of the acetyl-transferase hkm3 opens up the opportunity for hkm11 to introduce a second N-cinnamoyl moiety. The cytochrome P450 monooxygenase hkm5 catalyzes the methylenedioxy bridge formation, converting hancockiamide A into hancockiamide G. Hkm5 can also convert hancockiamide B into hancockiamide C, and hancockiamide D into hancockiamide H. The N-acetyltransferase hkm3 finally transfers an acetyl group to 1-N of piperazine, converting hancockiamide A into hancockiamide B and hancockiamide G into hancockiamide C. The chain is Nonribosomal peptide synthetase hkm11 from Aspergillus hancockii.